The primary structure comprises 384 residues: uncharacterized protein (384 aa).

Basic residues predominate over residues 327 to 339; sequence KKEKKEKKEKKPK. The interval 327-358 is disordered; that stretch reads KKEKKEKKEKKPKKAVEEEPKQYLTPEFVNDD.

This is an uncharacterized protein from Magallana gigas (Pacific oyster).